Reading from the N-terminus, the 189-residue chain is GTP cyclohydrolase 1 (189 aa).

Residues cysteine 78, histidine 81, and cysteine 150 each contribute to the Zn(2+) site.

Belongs to the GTP cyclohydrolase I family. Homomer.

It catalyses the reaction GTP + H2O = 7,8-dihydroneopterin 3'-triphosphate + formate + H(+). It functions in the pathway cofactor biosynthesis; 7,8-dihydroneopterin triphosphate biosynthesis; 7,8-dihydroneopterin triphosphate from GTP: step 1/1. The polypeptide is GTP cyclohydrolase 1 (Bacillus anthracis (strain A0248)).